Consider the following 306-residue polypeptide: Curved DNA-binding protein (306 aa).

In terms of domain architecture, J spans 5-69 (DYYAIMGVKP…QRRAEYDQLW (65 aa)).

Its subcellular location is the cytoplasm. The protein resides in the nucleoid. DNA-binding protein that preferentially recognizes a curved DNA sequence. It is probably a functional analog of DnaJ; displays overlapping activities with DnaJ, but functions under different conditions, probably acting as a molecular chaperone in an adaptive response to environmental stresses other than heat shock. Lacks autonomous chaperone activity; binds native substrates and targets them for recognition by DnaK. Its activity is inhibited by the binding of CbpM. This is Curved DNA-binding protein from Citrobacter koseri (strain ATCC BAA-895 / CDC 4225-83 / SGSC4696).